The following is a 171-amino-acid chain: Transcription factor E (171 aa).

The HTH TFE/IIEalpha-type domain maps to 5–91 (DNKAVRGYIQ…LWKLDLDNSV (87 aa)).

The protein belongs to the TFE family. In terms of assembly, monomer. Interaction with RNA polymerase subunits RpoF and RpoE is necessary for Tfe stimulatory transcription activity. Able to interact with Tbp and RNA polymerase in the absence of DNA promoter. Interacts both with the preinitiation and elongation complexes.

Transcription factor that plays a role in the activation of archaeal genes transcribed by RNA polymerase. Facilitates transcription initiation by enhancing TATA-box recognition by TATA-box-binding protein (Tbp), and transcription factor B (Tfb) and RNA polymerase recruitment. Not absolutely required for transcription in vitro, but particularly important in cases where Tbp or Tfb function is not optimal. It dynamically alters the nucleic acid-binding properties of RNA polymerases by stabilizing the initiation complex and destabilizing elongation complexes. Seems to translocate with the RNA polymerase following initiation and acts by binding to the non template strand of the transcription bubble in elongation complexes. In Methanocella arvoryzae (strain DSM 22066 / NBRC 105507 / MRE50), this protein is Transcription factor E.